A 69-amino-acid polypeptide reads, in one-letter code: MIYKVFYQEKADEVPVREKTDSLYIEGVSERDVRTKLKEKKFNIEFITPVDGAFLEYEQQSENFKVLEL.

The protein belongs to the RNA polymerase subunit epsilon family. In terms of assembly, monomer. RNAP is composed of a core of 2 alpha, a beta and a beta' subunit. The core is associated with a delta subunit, and at least one of epsilon or omega. When a sigma factor is associated with the core the holoenzyme is formed, which can initiate transcription.

It is found in the cytoplasm. Its subcellular location is the nucleoid. The enzyme catalyses RNA(n) + a ribonucleoside 5'-triphosphate = RNA(n+1) + diphosphate. Its function is as follows. A non-essential component of RNA polymerase (RNAP). Has a similar structure to bacteriophage T7 protein Gp2 (AC P03704), which is known to bind to RNAP in the DNA binding-cleft. Unlike Gp2 however, this protein does not inhibit transcription initiation. In vitro reconstitution experiments show this subunit is dispensible. This chain is DNA-directed RNA polymerase subunit epsilon, found in Bacillus subtilis (strain 168).